Reading from the N-terminus, the 458-residue chain is tRNA-2-methylthio-N(6)-dimethylallyladenosine synthase (458 aa).

One can recognise an MTTase N-terminal domain in the interval glutamine 3–cysteine 120. 6 residues coordinate [4Fe-4S] cluster: cysteine 12, cysteine 49, cysteine 83, cysteine 157, cysteine 161, and cysteine 164. Positions arginine 143–lysine 375 constitute a Radical SAM core domain. A TRAM domain is found at alanine 378 to glycine 441.

It belongs to the methylthiotransferase family. MiaB subfamily. In terms of assembly, monomer. Requires [4Fe-4S] cluster as cofactor.

The protein localises to the cytoplasm. It carries out the reaction N(6)-dimethylallyladenosine(37) in tRNA + (sulfur carrier)-SH + AH2 + 2 S-adenosyl-L-methionine = 2-methylsulfanyl-N(6)-dimethylallyladenosine(37) in tRNA + (sulfur carrier)-H + 5'-deoxyadenosine + L-methionine + A + S-adenosyl-L-homocysteine + 2 H(+). Its function is as follows. Catalyzes the methylthiolation of N6-(dimethylallyl)adenosine (i(6)A), leading to the formation of 2-methylthio-N6-(dimethylallyl)adenosine (ms(2)i(6)A) at position 37 in tRNAs that read codons beginning with uridine. The chain is tRNA-2-methylthio-N(6)-dimethylallyladenosine synthase from Methylococcus capsulatus (strain ATCC 33009 / NCIMB 11132 / Bath).